Here is a 340-residue protein sequence, read N- to C-terminus: Conidiation-specific protein 13 (340 aa).

Positions 313-340 (AEAAAGISSGKPAADRKTKGKKGTKFRV) are disordered. Positions 330 to 340 (TKGKKGTKFRV) are enriched in basic residues.

This chain is Conidiation-specific protein 13 (con-13), found in Neurospora crassa (strain ATCC 24698 / 74-OR23-1A / CBS 708.71 / DSM 1257 / FGSC 987).